A 474-amino-acid chain; its full sequence is Dihydrolipoyl dehydrogenase (474 aa).

FAD-binding positions include 34–42, Lys-51, and Gly-114; that span reads EKEKLGGTC. Cys-42 and Cys-47 are joined by a disulfide. NAD(+)-binding positions include 188–192, Glu-211, Val-245, and 278–281; these read GGGVI and SIGR. Residues Asp-320 and Ala-328 each contribute to the FAD site. The active-site Proton acceptor is the His-453.

The protein belongs to the class-I pyridine nucleotide-disulfide oxidoreductase family. Homodimer. FAD serves as cofactor.

The protein resides in the cytoplasm. The enzyme catalyses N(6)-[(R)-dihydrolipoyl]-L-lysyl-[protein] + NAD(+) = N(6)-[(R)-lipoyl]-L-lysyl-[protein] + NADH + H(+). Functionally, the branched-chain alpha-keto dehydrogenase complex catalyzes the overall conversion of alpha-keto acids to acyl-CoA and CO(2). It contains multiple copies of 3 enzymatic components: branched-chain alpha-keto acid decarboxylase (E1), lipoamide acyltransferase (E2) and lipoamide dehydrogenase (E3). The chain is Dihydrolipoyl dehydrogenase (bfmBC) from Bacillus subtilis (strain 168).